Reading from the N-terminus, the 544-residue chain is MEAWRCVRKGYGHCVVGRGRYPMFPHHSRSLGRDWTTPWENLQRCCWNRHISSCMRWPGHYSRAPYPYFSSRHFSLNWRPPCLFESRTQFQYCNWRPDNLSQTSLIHLSSYVMNAEGDEPSSKRRKHQGVIKRNWEYICSHDKEKTKILGDKNVDPKCEDSENKFDFSVMSYNILSQDLLEDNSHLYRHCRRPVLHWSFRFPNILKEIKHFDADVLCLQEVQEDHYGAEIRPSLESLGYHCEYKMRTGRKPDGCAICFKHSKFSLLSVNPVEFFRPDISLLDRDNVGLVLLLQPKIPYAACPAICVANTHLLYNPRRGDIKLTQLAMLLAEISSVAHQKDGSFCPIVMCGDFNSVPGSPLYSFIKEGKLNYEGLPIGKVSGQEQSSRGQRILSIPIWPPNLGISQNCVYEVQQVPKVEKTDSDLTQTQLKQTEVLVTAEKLSSNLQHHFSLSSVYSHYFPDTGIPEVTTCHSRSAITVDYIFYSAEKEDVAGHPGAEVALVGGLKLLARLSLLTEQDLWTVNGLPNENNSSDHLPLLAKFRLEL.

This sequence belongs to the CCR4/nocturin family.

This chain is Protein angel homolog 2 (ANGEL2), found in Homo sapiens (Human).